A 233-amino-acid chain; its full sequence is Type IV secretion system protein PtlE homolog (233 aa).

The helical transmembrane segment at Val42 to Pro62 threads the bilayer.

It belongs to the virB8 family.

Its subcellular location is the cell inner membrane. This chain is Type IV secretion system protein PtlE homolog (ptlE), found in Bordetella parapertussis (strain 12822 / ATCC BAA-587 / NCTC 13253).